Reading from the N-terminus, the 56-residue chain is Large ribosomal subunit protein bL32B (56 aa).

Basic residues predominate over residues 1-19 (MAVPKRRMSRSNTRHRRAQ). The segment at 1–22 (MAVPKRRMSRSNTRHRRAQWKA) is disordered.

It belongs to the bacterial ribosomal protein bL32 family.

The sequence is that of Large ribosomal subunit protein bL32B (rpmF2) from Streptomyces coelicolor (strain ATCC BAA-471 / A3(2) / M145).